The chain runs to 2327 residues: Pre-mRNA-processing-splicing factor 8 homolog (2327 aa).

Residues 1-14 (MDDTNSNINQSNES) show a composition bias toward polar residues. The interval 1–20 (MDDTNSNINQSNESQHLEEK) is disordered. Residues 801-1292 (TTVHWLEKRR…KIQTRVKIGL (492 aa)) form a reverse transcriptase homology domain region. The tract at residues 1293–1566 (NSKMPNRFPP…TLKISLIQIF (274 aa)) is linker. Residues 1502–1515 (MKYKKLTHAQRSGL) form an important for branch point selection region. Residues 1570 to 1740 (LWQKIHESLV…LRERIRKGLQ (171 aa)) are restriction endonuclease homology domain. The involved in interaction with pre-mRNA 5' splice site stretch occupies residues 1657–2023 (GDFDSHDIER…QIAEIEKQKT (367 aa)). An RNase H homology domain region spans residues 1755–2008 (NFGELFSNKI…ILGMEISAPS (254 aa)). Residues 2093–2223 (TYVFPKNILK…LTAYHLTPSG (131 aa)) form the MPN domain.

In terms of assembly, part of the U5 snRNP complex and of the U4/U6-U5 tri-snRNP complex.

The protein resides in the nucleus speckle. Functions as a scaffold that mediates the ordered assembly of spliceosomal proteins and snRNAs. Required for the assembly of the U4/U6-U5 tri-snRNP complex. Functions as a scaffold that positions spliceosomal U2, U5 and U6 snRNAs at splice sites on pre-mRNA substrates, so that splicing can occur. Interacts with both the 5' and the 3' splice site. The chain is Pre-mRNA-processing-splicing factor 8 homolog (prpf8) from Dictyostelium discoideum (Social amoeba).